Reading from the N-terminus, the 1373-residue chain is Disease resistance protein RRS1 (1373 aa).

The TIR domain maps to 5-146; sequence EKDEEFVCIS…EIVRDVYETH (142 aa). The region spanning 170 to 421 is the NB-ARC domain; it reads IGIRCVGIWG…LLEGCGFFPH (252 aa). 179-186 serves as a coordination point for ATP; that stretch reads GMPGIGKT. 9 LRR repeats span residues 498-522, 535-553, 554-575, 577-598, 621-646, 665-688, 742-766, 768-793, and 831-854; these read SEEI…AFKN, NPEV…HSLP, NELR…NFDP, HLVE…TKNL, AENL…RLLR, PPNI…TVKP, LPNM…SIQG, PRFL…SLEI, and PRNL…PLSL. Positions 988-1005 match the Nuclear localization signal motif; the sequence is RNFHCWAPGKVVPKVRKD. Residues 1204 to 1272 constitute a DNA-binding region (WRKY); the sequence is IPAIDEGDLW…YLSEHNHPRP (69 aa). A disordered region spans residues 1300–1323; the sequence is RVFQNKDEPNKPHLPSSSTPPGNA.

Interacts with PopP2, a R.solanacearum type III effector.

It is found in the nucleus. Functionally, transcription factor. Interacts specifically with the W box (5'-(T)TGAC[CT]-3'), a frequently occurring elicitor-responsive cis-acting element. Also acts as a disease resistance protein involved in resistance to fungal and bacterial pathogens, including R.solanacearum, P.syringae pv. tomato and C.higginsianum. In presence of RPS4, elicites an EDS1-dependent hypersensitive response. The sequence is that of Disease resistance protein RRS1 from Arabidopsis thaliana (Mouse-ear cress).